Here is a 555-residue protein sequence, read N- to C-terminus: Cyclin-T1.2 (555 aa).

2 disordered regions span residues 315–429 (SYKG…NSSK) and 505–555 (PADS…GELV). Residues 321–335 (KPLSNSSDSPSTRPS) show a composition bias toward low complexity. Residues 341–359 (KNQKVVEQELMEQRMKEAA) show a composition bias toward basic and acidic residues. Residues 382-398 (TSSSASNNSNHQNRSSS) are compositionally biased toward low complexity. A compositionally biased stretch (pro residues) spans 521–543 (PDEPSPPVSQILLPPPPPPPILP).

It belongs to the cyclin family. Cyclin C subfamily.

Its function is as follows. Regulatory subunit of the cyclin-dependent kinase pair (CDK9/cyclin T) complex, also called positive transcription elongation factor B (P-TEFb), which is proposed to facilitate the transition from abortive to production elongation by phosphorylating the CTD (carboxy-terminal domain) of the large subunit of RNA polymerase II (RNAP II). This chain is Cyclin-T1.2 (cit-1.2), found in Caenorhabditis elegans.